The chain runs to 272 residues: Cholesterol 25-hydroxylase (272 aa).

Asn-5 is a glycosylation site (N-linked (GlcNAc...) asparagine). 3 consecutive transmembrane segments (helical) span residues Phe-38–Leu-58, Leu-84–Leu-104, and Leu-121–Val-141. Positions Leu-129–Thr-263 constitute a Fatty acid hydroxylase domain. The Histidine box-1 signature appears at Trp-142–His-146. The short motif at His-157 to His-161 is the Histidine box-2 element. N-linked (GlcNAc...) asparagine glycans are attached at residues Asn-163 and Asn-189. The short motif at His-238 to Ser-244 is the Histidine box-3 element.

This sequence belongs to the sterol desaturase family. Fe cation is required as a cofactor. N-glycosylated.

The protein resides in the endoplasmic reticulum membrane. The enzyme catalyses cholesterol + AH2 + O2 = 25-hydroxycholesterol + A + H2O. It carries out the reaction cholesterol + NADPH + O2 + H(+) = 25-hydroxycholesterol + NADP(+) + H2O. Catalyzes the formation of 25-hydroxycholesterol from cholesterol, leading to repress cholesterol biosynthetic enzymes. Plays a key role in cell positioning and movement in lymphoid tissues: 25-hydroxycholesterol is an intermediate in biosynthesis of 7-alpha,25-dihydroxycholesterol (7-alpha,25-OHC), an oxysterol that acts as a ligand for the G protein-coupled receptor GPR183/EBI2, a chemotactic receptor for a number of lymphoid cells. May play an important role in regulating lipid metabolism by synthesizing a corepressor that blocks sterol regulatory element binding protein (SREBP) processing. As an interferon-stimulated gene, has broad antiviral activities against a wide range of enveloped viruses, such as vesicular stomatitis virus (VSV) and SARS coronavirus-2 (SARS-CoV-2). Its product, 25-hydroxycholesterol, activates the ER-localized enzyme ACAT to induce internalization of accessible cholesterol on the plasma membrane and restricts SARS-CoV-2 S protein-mediated fusion which inhibits virus replication. In testis, production of 25-hydroxycholesterol by macrophages plays a role in Leydig cell differentiation. Required to restrain inflammation in macrophages: production of 25-hydroxycholesterol protects macrophages from cholesterol overload, thereby preventing mitochondrial DNA release and subsequent activation of the AIM2 inflammasome. This chain is Cholesterol 25-hydroxylase, found in Homo sapiens (Human).